The primary structure comprises 405 residues: Argininosuccinate synthase (405 aa).

8–16 contributes to the ATP binding site; it reads AYSGGLDTS. The L-citrulline site is built by Y86 and S91. G116 contacts ATP. L-aspartate contacts are provided by T118, N122, and D123. N122 contacts L-citrulline. Positions 126, 175, 184, 260, and 272 each coordinate L-citrulline.

Belongs to the argininosuccinate synthase family. Type 1 subfamily. As to quaternary structure, homotetramer.

It localises to the cytoplasm. The enzyme catalyses L-citrulline + L-aspartate + ATP = 2-(N(omega)-L-arginino)succinate + AMP + diphosphate + H(+). It participates in amino-acid biosynthesis; L-arginine biosynthesis; L-arginine from L-ornithine and carbamoyl phosphate: step 2/3. This chain is Argininosuccinate synthase, found in Koribacter versatilis (strain Ellin345).